The following is a 100-amino-acid chain: uncharacterized protein (100 aa).

A disordered region spans residues 42-84; the sequence is PGEPWRTAGGIGEGGAGGDGAAAGGEGDVHGRPAGAEDGEDGA. Over residues 50–67 the composition is skewed to gly residues; sequence GGIGEGGAGGDGAAAGGE.

This is an uncharacterized protein from Torque teno tamarin virus (isolate So-TTV2).